The chain runs to 451 residues: Tubulin alpha-2 chain (451 aa).

Position 11 (glutamine 11) interacts with GTP. N6-acetyllysine is present on lysine 40. Glutamate 71, glycine 144, threonine 145, threonine 179, asparagine 206, and asparagine 228 together coordinate GTP. Glutamate 71 contributes to the Mg(2+) binding site. Residue glutamate 254 is part of the active site.

This sequence belongs to the tubulin family. In terms of assembly, dimer of alpha and beta chains. A typical microtubule is a hollow water-filled tube with an outer diameter of 25 nm and an inner diameter of 15 nM. Alpha-beta heterodimers associate head-to-tail to form protofilaments running lengthwise along the microtubule wall with the beta-tubulin subunit facing the microtubule plus end conferring a structural polarity. Microtubules usually have 13 protofilaments but different protofilament numbers can be found in some organisms and specialized cells. Mg(2+) serves as cofactor. Undergoes a tyrosination/detyrosination cycle, the cyclic removal and re-addition of a C-terminal tyrosine residue by the enzymes tubulin tyrosine carboxypeptidase (TTCP) and tubulin tyrosine ligase (TTL), respectively. In terms of processing, acetylation of alpha chains at Lys-40 stabilizes microtubules and affects affinity and processivity of microtubule motors. This modification has a role in multiple cellular functions, ranging from cell motility, cell cycle progression or cell differentiation to intracellular trafficking and signaling.

Its subcellular location is the cytoplasm. It is found in the cytoskeleton. The enzyme catalyses GTP + H2O = GDP + phosphate + H(+). In terms of biological role, tubulin is the major constituent of microtubules, a cylinder consisting of laterally associated linear protofilaments composed of alpha- and beta-tubulin heterodimers. Microtubules grow by the addition of GTP-tubulin dimers to the microtubule end, where a stabilizing cap forms. Below the cap, tubulin dimers are in GDP-bound state, owing to GTPase activity of alpha-tubulin. This chain is Tubulin alpha-2 chain (TUBA2), found in Hordeum vulgare (Barley).